Reading from the N-terminus, the 200-residue chain is Inducible T-cell costimulator (200 aa).

The signal sequence occupies residues 1 to 20; that stretch reads MKPYFSCVFVFCFLIKLLTG. At 21-145 the chain is on the extracellular side; it reads ELNDLANHRM…LCCQLKLWLP (125 aa). An Ig-like V-type domain is found at 30–133; sequence MFSFHDGGVQ…LSGGYLLIYE (104 aa). Intrachain disulfides connect Cys42–Cys109 and Cys63–Cys83. 2 N-linked (GlcNAc...) asparagine glycosylation sites follow: Asn89 and Asn123. The helical transmembrane segment at 146-166 threads the bilayer; that stretch reads VGCAAFVAALLFGCIFIVWFA. The Cytoplasmic segment spans residues 167-200; sequence KKKYRSSVHDPNSEYMFMAAVNTNKKSRLAGMTS.

As to quaternary structure, homodimer; disulfide-linked. Interacts with ICOSLG. Interacts with PIK3R1. Interacts with TBK1; this interaction is critical for the maturation of T follicular regulatory cells. N-glycosylated. In terms of tissue distribution, strongly expressed in the spleen and lung. Lower expression seen in liver, kidney and testis.

It localises to the cell membrane. Functionally, stimulatory receptor expressed in activated or antigen-experienced T-cells that plays an important role in the immune response. Upon binding to its ligand ICOSL expressed on antigen presenting cells (APCs), delivers costimulatory signals that enhances all basic T-cell responses to a foreign antigen, namely proliferation, secretion of lymphokines including IL10, up-regulation of molecules that mediate cell-cell interaction, and effective help for antibody secretion by B-cells. Also acts as a costimulatory receptor critical for the differentiation of T follicular regulatory cells upon immune challenges such as viral infection. Mechanistically, potentiates TCR-induced calcium flux by augmenting PLCG1 activation and actin remodeling. In addition, activates PI3K signaling pathways independently of calcium flux. Essential both for efficient interaction between T and B-cells and for normal antibody responses to T-cell dependent antigens. Prevents the apoptosis of pre-activated T-cells. Plays a critical role in CD40-mediated class switching of immunoglobin isotypes. The sequence is that of Inducible T-cell costimulator (Icos) from Rattus norvegicus (Rat).